Reading from the N-terminus, the 260-residue chain is Thymidylate synthase (260 aa).

The protein operates within pyrimidine metabolism; dTTP biosynthesis. In terms of biological role, is able to catalyze the biosynthesis of dTMP using dUMP, tetrahydrofolate and formaldehyde in vitro, i.e. a reaction equivalent to that catalyzed by bacterial thymidylate synthases (EC 2.1.1.45). However, M.jannaschii like most methanogenic Archaea lacks folates, thus the physiological cosubstrate is unknown but is likely one of the non-methylated methanopterin biosynthetic intermediates. The chain is Thymidylate synthase from Methanocaldococcus jannaschii (strain ATCC 43067 / DSM 2661 / JAL-1 / JCM 10045 / NBRC 100440) (Methanococcus jannaschii).